The following is a 995-amino-acid chain: KN motif and ankyrin repeat domain-containing protein 4 (995 aa).

Disordered regions lie at residues 1-29 and 68-127; these read MEKT…SVET and TLPR…EVSY. Residues 101 to 124 show a composition bias toward polar residues; it reads LGTQEQNQSPPLGNAPQASTSRSE. Residues 343–404 are a coiled coil; the sequence is SSLKQQVSAL…EGQFHQENAK (62 aa). Disordered regions lie at residues 443 to 467, 503 to 558, 617 to 642, 663 to 705, and 721 to 740; these read ESWG…GNQS, EAGT…PTDA, QAHP…TSLK, LQFV…PDHK, and PEGT…VPHS. The span at 511 to 523 shows a compositional bias: gly residues; the sequence is GPQGGTRGAGGFL. A compositionally biased stretch (basic and acidic residues) spans 526–549; sequence SDRKTPPAGREETSSNLPGKEHPG. Low complexity predominate over residues 625–640; it reads PASSSSPPVEISPSTS. Positions 680–693 are enriched in acidic residues; it reads TSGEDSTPEDLSDS. The segment covering 694 to 705 has biased composition (basic and acidic residues); sequence EAEKKCDGPDHK. ANK repeat units follow at residues 823–853, 862–890, 895–924, 928–958, and 962–992; these read NGNT…NVDH, VMIT…NVNI, GGQT…DVNL, DGSS…DSSL, and AGRT…QGRS.

In terms of tissue distribution, strongly expressed in colon, liver, lung, skeletal muscle and kidney.

Its subcellular location is the cytoplasm. Its function is as follows. May be involved in the control of cytoskeleton formation by regulating actin polymerization. The chain is KN motif and ankyrin repeat domain-containing protein 4 (KANK4) from Homo sapiens (Human).